The chain runs to 351 residues: Alcohol dehydrogenase 2 (351 aa).

Residues cysteine 47, histidine 70, cysteine 101, cysteine 104, cysteine 107, cysteine 115, and cysteine 157 each contribute to the Zn(2+) site. Residues 181 to 187, aspartate 205, lysine 209, 271 to 273, and arginine 343 contribute to the NAD(+) site; these read GAGGGLG and VGL.

Belongs to the zinc-containing alcohol dehydrogenase family. In terms of assembly, homotetramer. Zn(2+) is required as a cofactor.

It carries out the reaction a primary alcohol + NAD(+) = an aldehyde + NADH + H(+). The enzyme catalyses a secondary alcohol + NAD(+) = a ketone + NADH + H(+). This Caenorhabditis elegans protein is Alcohol dehydrogenase 2 (sodh-2).